The sequence spans 480 residues: Lysosomal protective protein (480 aa).

An N-terminal signal peptide occupies residues 1–28 (MIRAAPPPLFLLLLLLLLLVSWASRGEA). 4 cysteine pairs are disulfide-bonded: cysteine 88–cysteine 362, cysteine 240–cysteine 256, cysteine 241–cysteine 246, and cysteine 281–cysteine 331. Asparagine 145 is a glycosylation site (N-linked (GlcNAc...) asparagine). Residue serine 178 is part of the active site. An N-linked (GlcNAc...) asparagine glycan is attached at asparagine 333. Residues aspartate 400 and histidine 457 contribute to the active site.

This sequence belongs to the peptidase S10 family. As to quaternary structure, heterodimer of a 32 kDa chain and a 20 kDa chain; disulfide-linked.

The protein localises to the lysosome. It carries out the reaction Release of a C-terminal amino acid with broad specificity.. Protective protein appears to be essential for both the activity of beta-galactosidase and neuraminidase, it associates with these enzymes and exerts a protective function necessary for their stability and activity. This protein is also a carboxypeptidase and can deamidate tachykinins. This is Lysosomal protective protein (CTSA) from Homo sapiens (Human).